A 354-amino-acid chain; its full sequence is Release factor glutamine methyltransferase (354 aa).

Residues 174 to 178 (GSGSG), D197, and N241 each bind S-adenosyl-L-methionine. 241–244 (NPPY) is a substrate binding site.

It belongs to the protein N5-glutamine methyltransferase family. PrmC subfamily.

It catalyses the reaction L-glutaminyl-[peptide chain release factor] + S-adenosyl-L-methionine = N(5)-methyl-L-glutaminyl-[peptide chain release factor] + S-adenosyl-L-homocysteine + H(+). In terms of biological role, methylates the class 1 translation termination release factors RF1/PrfA and RF2/PrfB on the glutamine residue of the universally conserved GGQ motif. The protein is Release factor glutamine methyltransferase of Fusobacterium nucleatum subsp. nucleatum (strain ATCC 25586 / DSM 15643 / BCRC 10681 / CIP 101130 / JCM 8532 / KCTC 2640 / LMG 13131 / VPI 4355).